Consider the following 404-residue polypeptide: Probable ketol-acid reductoisomerase, mitochondrial (404 aa).

One can recognise a KARI N-terminal Rossmann domain in the interval 63–253; the sequence is TKENVWERSD…AVGSGFIYQT (191 aa). NADP(+) is bound by residues 91–100, 115–120, and 153–157; these read GYGSQGHGQG, RKDGAS, and SDAAQ. Residue H178 is part of the active site. Residues 254–401 form the KARI C-terminal knotted domain; the sequence is TFKKEVISDL…EVVRSLRPEH (148 aa). Residue S261 is modified to Phosphoserine. The Mg(2+) site is built by D262, E266, E298, and E302. S324 is a binding site for substrate.

The protein belongs to the ketol-acid reductoisomerase family. Mg(2+) is required as a cofactor.

It is found in the mitochondrion. It catalyses the reaction (2R)-2,3-dihydroxy-3-methylbutanoate + NADP(+) = (2S)-2-acetolactate + NADPH + H(+). It carries out the reaction (2R,3R)-2,3-dihydroxy-3-methylpentanoate + NADP(+) = (S)-2-ethyl-2-hydroxy-3-oxobutanoate + NADPH + H(+). It participates in amino-acid biosynthesis; L-isoleucine biosynthesis; L-isoleucine from 2-oxobutanoate: step 2/4. Its pathway is amino-acid biosynthesis; L-valine biosynthesis; L-valine from pyruvate: step 2/4. The polypeptide is Probable ketol-acid reductoisomerase, mitochondrial (ilv5) (Schizosaccharomyces pombe (strain 972 / ATCC 24843) (Fission yeast)).